The primary structure comprises 347 residues: S-adenosylmethionine:tRNA ribosyltransferase-isomerase (347 aa).

It belongs to the QueA family. In terms of assembly, monomer.

It localises to the cytoplasm. It carries out the reaction 7-aminomethyl-7-carbaguanosine(34) in tRNA + S-adenosyl-L-methionine = epoxyqueuosine(34) in tRNA + adenine + L-methionine + 2 H(+). Its pathway is tRNA modification; tRNA-queuosine biosynthesis. Functionally, transfers and isomerizes the ribose moiety from AdoMet to the 7-aminomethyl group of 7-deazaguanine (preQ1-tRNA) to give epoxyqueuosine (oQ-tRNA). This Xylella fastidiosa (strain 9a5c) protein is S-adenosylmethionine:tRNA ribosyltransferase-isomerase.